A 519-amino-acid chain; its full sequence is Cytochrome P450 monooxygenase apdE (519 aa).

The helical transmembrane segment at phenylalanine 27 to tyrosine 47 threads the bilayer. N-linked (GlcNAc...) asparagine glycans are attached at residues asparagine 327 and asparagine 379. Heme is bound at residue cysteine 466. Residue asparagine 508 is glycosylated (N-linked (GlcNAc...) asparagine).

This sequence belongs to the cytochrome P450 family. Heme is required as a cofactor.

The protein resides in the membrane. Its pathway is secondary metabolite biosynthesis. Cytochrome P450 monooxygenase; part of the gene cluster that mediates the biosynthesis of aspyridones. The polyketide-amino acid backbone preaspyridone A is first assembled by the PKS-NRPS hybrid apdA. The assembly of preaspyridone A is initiated by loading of malonyl-CoA onto apdA, followed by decarboxylation to yield the acetyl starter unit. The growing polyketide chain then elongates into a tetraketide. The adpA PKS module catalyzes three Claisen condensations, as well as beta-keto processing and methylation. Alpha-methylation step during polyketide synthesis is a prerequisite and a key checkpoint for chain transfer between PKS and NRPS modules. The downstream NRPS module contains the condensation (C), adenylation (A), and thiolation (T) domains and catalyzes the incorporation of tyrosine via the formation of the L-tyrosinyl-thioester and the amide linkage between L-tyrosinyl-thioester and the tetraketide. The bimodular assembly line is terminated with a reductase (R) domain that facilitates formation and release of the tetramic acid product. Because apdA lacks a designated enoylreductase (ER) domain, the required activity is provided the enoyl reductase apdC. ApdC appears to operate with different stereoselectivity in different PKS cycle. Combined with apdC, apdA is proposed to synthesize preaspyridone A via about 20 enzymatic steps. A number of oxidative steps performed successively by the cytochrome P450 monooxygenases apdE and apdB are required for the conversion of preaspyridone A to aspyridone A. The cytochrome P450 monooxygenase apdE is responsible for the oxidative dephenylation of preaspyridone A. Finally, the predicted FAD-dependent monooxygenase apdD and the acyl-CoA dehydrogenase apdG may be involved in the transformation of aspyridone A into aspyridone B. This chain is Cytochrome P450 monooxygenase apdE, found in Emericella nidulans (strain FGSC A4 / ATCC 38163 / CBS 112.46 / NRRL 194 / M139) (Aspergillus nidulans).